A 278-amino-acid polypeptide reads, in one-letter code: Proteolipid protein DM beta (278 aa).

The next 4 membrane-spanning stretches (helical) occupy residues leucine 30–cysteine 46, valine 84–methionine 100, phenylalanine 130–alanine 146, and leucine 213–valine 229.

Belongs to the myelin proteolipid protein family.

It is found in the membrane. The polypeptide is Proteolipid protein DM beta (Squalus acanthias (Spiny dogfish)).